The sequence spans 360 residues: Histidinol-phosphate aminotransferase (360 aa).

The residue at position 222 (Lys222) is an N6-(pyridoxal phosphate)lysine.

It belongs to the class-II pyridoxal-phosphate-dependent aminotransferase family. Histidinol-phosphate aminotransferase subfamily. As to quaternary structure, homodimer. Pyridoxal 5'-phosphate is required as a cofactor.

The enzyme catalyses L-histidinol phosphate + 2-oxoglutarate = 3-(imidazol-4-yl)-2-oxopropyl phosphate + L-glutamate. Its pathway is amino-acid biosynthesis; L-histidine biosynthesis; L-histidine from 5-phospho-alpha-D-ribose 1-diphosphate: step 7/9. In Listeria monocytogenes serotype 4b (strain CLIP80459), this protein is Histidinol-phosphate aminotransferase.